Here is a 364-residue protein sequence, read N- to C-terminus: DNA replication and repair protein RecF (364 aa).

33 to 40 (GENGSGKT) is an ATP binding site.

The protein belongs to the RecF family.

It localises to the cytoplasm. In terms of biological role, the RecF protein is involved in DNA metabolism; it is required for DNA replication and normal SOS inducibility. RecF binds preferentially to single-stranded, linear DNA. It also seems to bind ATP. This chain is DNA replication and repair protein RecF, found in Rickettsia felis (strain ATCC VR-1525 / URRWXCal2) (Rickettsia azadi).